The primary structure comprises 164 residues: Pyruvoyl-dependent arginine decarboxylase (164 aa).

S52 is modified (pyruvic acid (Ser)).

Belongs to the PdaD family. Pyruvate serves as cofactor.

It catalyses the reaction L-arginine + H(+) = agmatine + CO2. The chain is Pyruvoyl-dependent arginine decarboxylase from Methanococcus maripaludis (strain C5 / ATCC BAA-1333).